The chain runs to 88 residues: Small ribosomal subunit protein bS20 (88 aa).

Positions 1–20 are disordered; that stretch reads MPNIKSAIKRTKTNNERRAH.

Belongs to the bacterial ribosomal protein bS20 family.

Its function is as follows. Binds directly to 16S ribosomal RNA. The protein is Small ribosomal subunit protein bS20 of Bacillus velezensis (strain DSM 23117 / BGSC 10A6 / LMG 26770 / FZB42) (Bacillus amyloliquefaciens subsp. plantarum).